The following is a 397-amino-acid chain: Growth-regulating factor 5 (397 aa).

The region spanning 16-51 (PFTPTQWEELEHQALIYKYMVSGVPVPPELIFSIRR) is the QLQ domain. 2 consecutive short sequence motifs (bipartite nuclear localization signal) follow at residues 78–96 (RKPDPEPGRCRRTDGKKWR) and 114–121 (RGRNRARK). The 45-residue stretch at 81–125 (DPEPGRCRRTDGKKWRCSREAYPDSKYCEKHMHRGRNRARKSLDQ) folds into the WRC domain. Disordered stretches follow at residues 108–172 (CEKH…SMDA), 197–217 (LDYPYPSTSPKQQQQTLHHAS), 288–320 (PYHHCSTDHNKIDHHHTYSSSSSSQHLHHDHDH), and 340–397 (VLAN…DTGS). A compositionally biased stretch (basic residues) spans 111 to 120 (HMHRGRNRAR). The segment covering 128–172 (TTTTPLTSPSLSFTNNNNPSPTLSSSSSSNSSSTTYSASSSSMDA) has biased composition (low complexity). Basic and acidic residues predominate over residues 288–298 (PYHHCSTDHNK).

Belongs to the GRF family. In terms of assembly, interacts with GIF1. As to expression, strongly expressed in actively growing and developing tissues, such as roots, upper stems, and shoot tips containing the shoot apical meristem (SAM) and flower buds. Also expressed in mature flowers, but weakly expressed in mature stems and leaves.

It localises to the nucleus. Its function is as follows. Transcription activator that plays a role in the regulation of cell expansion in leaf and cotyledons tissues. Acts together with GIF1 for the development of appropriate leaf size and shape through the promotion and/or maintenance of cell proliferation activity in leaf primordia. In Arabidopsis thaliana (Mouse-ear cress), this protein is Growth-regulating factor 5 (GRF5).